The chain runs to 1065 residues: MDPIIQTIQLFQHTLHHDANVIKAAEAQLQQIKVTDGYSRILLKILASNEVDISIRQGVSIFLKNMIITKWRGAEDESPITQEDAEFIKENLIDLLVHSHHLVQNQIEAMIEIIANRDFPEKWTSLLPKSIQYINTQDVKLILAGLTSIQLGIKRFRYVTMGDKKKELLYTIVNEIFPLLLQILEFLSQHQTIESALMQKKVIKIFGYAIHFEIPDLLIQPEVFNKWLSQFVRIIQRPITPQENVKHADDCRKNQWWLLKRTTAKLLNLLFRKSATSVRSTDHSSVKALNKLFMPVYSVEVMKVFYEQLSTLEQLYKGVHYERYQQKLIEYFSFAIKYGVTYVAMKPWLSTLIQQVLFPIICFNDRDAELWECDPNEFLRSQFESSMTFATARIEVLNFIIDVVGKRGRANLDMIMGFCIQSLNKYNAATNASEKNPREKDGVLVIISVLSAYLKNISFYKSNLEQMLLLHVFPELSSPHGFLKARACSLFSEFYNIEFTDPVYFSNALKLILGLMSDNDLPVRVKAGTSICNLVRANQGVDELRPILPQLLDKIFSLLSEAESEDLVIAIESIIQRFKHEIAPYAVNLCKNLSEQFLRLLELEESDESGESGFASQECLGVYCTLLRALKDIPDVFNSLEQQIVPILQKLFTSDHMMYLDEALRILTFVTYYPKSISPLVWSLFPQIMNLFDECACDFASSYVNPLDNYISYGTEYFLSNQQYIEMVFNMYKKMVGDINQQPVDAGDCCKIMESLIQRAKGRIDYMIVPVLELACGRLLNTDKNNQKSKEFTVYLLEIIANCIYYNPLISTQYLESKNLVEPIFGLWFNRIKHFQRFYDKKISVLAFSSLLTLNPSPNFVKFGTSLILEKMLQFTKDMLSIEKELDKQEAEREQKIKDGTLKPEEEEFIDENDEEDYFDNHKFEFEFTEIPDNQDCQHDDEGEVFLDDIEKATEYFENGGDLGEDEGDNFDDQNDDDDQDSEEDLFEDEDTPDFETPIDEVDGFEFMINSIQNFFQINPTCIQQISEKQQEKIKKYVASAPARKEKLRLEKEKEEKLKQQQQKK.

Positions 25-98 (AEAQLQQIKV…KENLIDLLVH (74 aa)) constitute an Importin N-terminal domain. Residues 958-996 (ENGGDLGEDEGDNFDDQNDDDDQDSEEDLFEDEDTPDFE) are disordered. Residues 963-996 (LGEDEGDNFDDQNDDDDQDSEEDLFEDEDTPDFE) show a composition bias toward acidic residues.

This sequence belongs to the importin beta family.

The protein localises to the cytoplasm. It is found in the nucleus. Its function is as follows. May function in nuclear protein import. In Dictyostelium discoideum (Social amoeba), this protein is Probable importin-7 homolog.